The chain runs to 171 residues: Peptide deformylase (171 aa).

The Fe cation site is built by cysteine 91 and histidine 133. Glutamate 134 is a catalytic residue. Histidine 137 is a binding site for Fe cation.

Belongs to the polypeptide deformylase family. Fe(2+) is required as a cofactor.

It carries out the reaction N-terminal N-formyl-L-methionyl-[peptide] + H2O = N-terminal L-methionyl-[peptide] + formate. In terms of biological role, removes the formyl group from the N-terminal Met of newly synthesized proteins. Requires at least a dipeptide for an efficient rate of reaction. N-terminal L-methionine is a prerequisite for activity but the enzyme has broad specificity at other positions. This chain is Peptide deformylase, found in Edwardsiella ictaluri (strain 93-146).